The chain runs to 505 residues: Glutamate--tRNA ligase (505 aa).

The short motif at 11–21 (PSPTGPLHIGG) is the 'HIGH' region element. The 'KMSKS' region signature appears at 260–264 (KLSKR). Residue lysine 263 participates in ATP binding.

The protein belongs to the class-I aminoacyl-tRNA synthetase family. Glutamate--tRNA ligase type 1 subfamily. In terms of assembly, monomer.

The protein localises to the cytoplasm. The enzyme catalyses tRNA(Glu) + L-glutamate + ATP = L-glutamyl-tRNA(Glu) + AMP + diphosphate. Catalyzes the attachment of glutamate to tRNA(Glu) in a two-step reaction: glutamate is first activated by ATP to form Glu-AMP and then transferred to the acceptor end of tRNA(Glu). This is Glutamate--tRNA ligase from Christiangramia forsetii (strain DSM 17595 / CGMCC 1.15422 / KT0803) (Gramella forsetii).